The sequence spans 415 residues: Serine--tRNA ligase (415 aa).

231–233 (TAE) contacts L-serine. 262 to 264 (RSE) serves as a coordination point for ATP. Glutamate 285 contributes to the L-serine binding site. An ATP-binding site is contributed by 349 to 352 (EISS). An L-serine-binding site is contributed by serine 383.

It belongs to the class-II aminoacyl-tRNA synthetase family. Type-1 seryl-tRNA synthetase subfamily. As to quaternary structure, homodimer. The tRNA molecule binds across the dimer.

It localises to the cytoplasm. It carries out the reaction tRNA(Ser) + L-serine + ATP = L-seryl-tRNA(Ser) + AMP + diphosphate + H(+). It catalyses the reaction tRNA(Sec) + L-serine + ATP = L-seryl-tRNA(Sec) + AMP + diphosphate + H(+). The protein operates within aminoacyl-tRNA biosynthesis; selenocysteinyl-tRNA(Sec) biosynthesis; L-seryl-tRNA(Sec) from L-serine and tRNA(Sec): step 1/1. In terms of biological role, catalyzes the attachment of serine to tRNA(Ser). Is also able to aminoacylate tRNA(Sec) with serine, to form the misacylated tRNA L-seryl-tRNA(Sec), which will be further converted into selenocysteinyl-tRNA(Sec). The sequence is that of Serine--tRNA ligase from Helicobacter pylori (strain Shi470).